Reading from the N-terminus, the 186-residue chain is Potassium-transporting ATPase KdpC subunit (186 aa).

Residues 10 to 30 (LTIITMVLCGFLFPLAITLIG) traverse the membrane as a helical segment.

It belongs to the KdpC family. The system is composed of three essential subunits: KdpA, KdpB and KdpC.

It localises to the cell membrane. Functionally, part of the high-affinity ATP-driven potassium transport (or Kdp) system, which catalyzes the hydrolysis of ATP coupled with the electrogenic transport of potassium into the cytoplasm. This subunit acts as a catalytic chaperone that increases the ATP-binding affinity of the ATP-hydrolyzing subunit KdpB by the formation of a transient KdpB/KdpC/ATP ternary complex. In Staphylococcus aureus (strain bovine RF122 / ET3-1), this protein is Potassium-transporting ATPase KdpC subunit.